Reading from the N-terminus, the 69-residue chain is Consomatin Be1 (69 aa).

Residues 1-22 (MEMAYWVMVMMMVWITAPLSEG) form the signal peptide. A propeptide spanning residues 23-57 (GKLNDVIRALAPDDVTPQFILRSLISRRRSDSDVR) is cleaved from the precursor. The residue at position 58 (Glu-58) is a 4-carboxyglutamate. A disulfide bond links Cys-62 and Cys-67. The residue at position 64 (Trp-64) is a D-tryptophan. Residues Pro-68 and Pro-69 each carry the 4-hydroxyproline modification.

Belongs to the conotoxin C superfamily. Consomatin family. In terms of tissue distribution, expressed by the venom duct.

Its subcellular location is the secreted. In terms of biological role, moderately activates human somatostatin receptors (SSTR) with a preferential activation of SSTR1 and SSTR4. In vivo, does not cause behavioral changes in mice within a few minutes of intracranial injection, but causes a progressive loss of movement thereafter. Four to five hours after injection, mice recover, even with the highest dose tested. Shows antinociception and antihyperalgesia activities in two mouse models of acute pain, most probably by acting outside the central nervous system. In Conus betulinus (Beech cone), this protein is Consomatin Be1.